The sequence spans 349 residues: MDMENLTWLHGKPTASGILKANPEDFVVVEDLGFEPDGEGEHLLVRIRKNGCNTQFVADYLARFAKLHPRLVSYAGLKDRHAVTEQWFCLHLPGKEAPDLATFELEGCEVLEAVRHKRKLRIGSLKGNAFTLVLRHITDRQDVEQRLQQIAAQGVPNYFGSQRFGRGGNNLVQARLWANNEIRVKERSKRSFYLSASRSAMFNLISSHRLAQQLSTTVLEGDALQLSGRGSWFVAQADELATLQQRVTAGELNITAPLPGDSELGTHGEALAFEQACLAEQTELLSLIKHERVEGSRRAVLLKPQNMISNWWDDVTLELSFWLPAGSFATSVVREIMNQDRADDTDIIE.

F26 is a binding site for substrate. D79 serves as the catalytic Nucleophile. Residue N128 participates in substrate binding. A TRUD domain is found at 154-302 (GVPNYFGSQR…VEGSRRAVLL (149 aa)). F328 lines the substrate pocket.

It belongs to the pseudouridine synthase TruD family.

It carries out the reaction uridine(13) in tRNA = pseudouridine(13) in tRNA. Responsible for synthesis of pseudouridine from uracil-13 in transfer RNAs. The sequence is that of tRNA pseudouridine synthase D from Yersinia pseudotuberculosis serotype IB (strain PB1/+).